The primary structure comprises 83 residues: NAD(P)H-quinone oxidoreductase subunit L (83 aa).

Transmembrane regions (helical) follow at residues 17–37 and 53–73; these read VLLA…LALL and TAIY…APFI.

Belongs to the complex I NdhL subunit family. As to quaternary structure, NDH-1 can be composed of about 15 different subunits; different subcomplexes with different compositions have been identified which probably have different functions.

The protein resides in the cellular thylakoid membrane. The enzyme catalyses a plastoquinone + NADH + (n+1) H(+)(in) = a plastoquinol + NAD(+) + n H(+)(out). It catalyses the reaction a plastoquinone + NADPH + (n+1) H(+)(in) = a plastoquinol + NADP(+) + n H(+)(out). Functionally, NDH-1 shuttles electrons from an unknown electron donor, via FMN and iron-sulfur (Fe-S) centers, to quinones in the respiratory and/or the photosynthetic chain. The immediate electron acceptor for the enzyme in this species is believed to be plastoquinone. Couples the redox reaction to proton translocation, and thus conserves the redox energy in a proton gradient. Cyanobacterial NDH-1 also plays a role in inorganic carbon-concentration. The sequence is that of NAD(P)H-quinone oxidoreductase subunit L from Synechococcus sp. (strain RCC307).